Here is a 479-residue protein sequence, read N- to C-terminus: MTFKVAIIGRPNVGKSTLFNRLVGRKLALVDDTPGVTRDRRVHAAKLYDLHFDVIDTAGFEDAGASTLPGRMRAQTEIAIHEADLIFFTIDAKSGLLPDDRTFAEIVRKSGKPVVLVANKAEAKGAQGGMLEAWELGLGEPIPVSAEHGQGMPDLRDAVIAALGEARAFGEEEEGEDDEIAATEVLIGEDIADPDAEDAHTYDNTKPMRIAVVGRPNAGKSTLINALIGEERLLTGPEAGITRDSISVDWDWHGRRLKLFDTAGMRRKARIHEKLEVMSVQDGLRAIRFAEIVIIVLDATIPFEKQDLQIADLIIREGRAPVIAFNKWDLIDHPQELLAELREKTERLLPQVRGIQAVPVSAETGRGLDKLMDAVLRTHKVWNSRVSTGKLNRWLEAILAHHPPPAVAGRRLKVKYVTQAKTRPPGFVVQCSRPDAMPQSYVRYLSNSLREAFDMPGVPIRIALRTSDNPFAGRAKKRG.

EngA-type G domains are found at residues Phe-3–Arg-167 and Met-208–Asn-383. Residues Gly-9–Ser-16, Asp-56–Phe-60, Asn-119–Glu-122, Gly-214–Ser-221, Asp-261–Met-265, and Asn-326–Asp-329 contribute to the GTP site. Residues Ser-384–Asp-468 form the KH-like domain.

The protein belongs to the TRAFAC class TrmE-Era-EngA-EngB-Septin-like GTPase superfamily. EngA (Der) GTPase family. In terms of assembly, associates with the 50S ribosomal subunit.

GTPase that plays an essential role in the late steps of ribosome biogenesis. In Mesorhizobium japonicum (strain LMG 29417 / CECT 9101 / MAFF 303099) (Mesorhizobium loti (strain MAFF 303099)), this protein is GTPase Der.